The following is an 84-amino-acid chain: Small ribosomal subunit protein eS27 (84 aa).

Residues 1 to 16 (MPLAKDLLHPSPEEEK) are compositionally biased toward basic and acidic residues. Positions 1–23 (MPLAKDLLHPSPEEEKRKHKKKR) are disordered. Ser11 is modified (phosphoserine). The C4-type zinc finger occupies 38–60 (PGCYKITTVFSHAQTVVLCVGCS).

Belongs to the eukaryotic ribosomal protein eS27 family. In terms of assembly, component of the small ribosomal subunit. Part of the small subunit (SSU) processome, composed of more than 70 proteins and the RNA chaperone small nucleolar RNA (snoRNA) U3. The cofactor is Zn(2+).

The protein localises to the cytoplasm. Its subcellular location is the nucleus. It localises to the nucleolus. Component of the small ribosomal subunit. The ribosome is a large ribonucleoprotein complex responsible for the synthesis of proteins in the cell. Required for proper rRNA processing and maturation of 18S rRNAs. Part of the small subunit (SSU) processome, first precursor of the small eukaryotic ribosomal subunit. During the assembly of the SSU processome in the nucleolus, many ribosome biogenesis factors, an RNA chaperone and ribosomal proteins associate with the nascent pre-rRNA and work in concert to generate RNA folding, modifications, rearrangements and cleavage as well as targeted degradation of pre-ribosomal RNA by the RNA exosome. In Mus musculus (Mouse), this protein is Small ribosomal subunit protein eS27.